The sequence spans 264 residues: Na(+)-translocating NADH-quinone reductase subunit E (264 aa).

The next 6 helical transmembrane spans lie at 11-31 (VFGI…NFLG), 50-70 (MSVA…HTFI), 90-110 (FLEL…LELL), 123-143 (GIFL…LFGI), 149-169 (FIPM…AIVL), and 189-209 (MGIS…LTGI).

This sequence belongs to the NqrDE/RnfAE family. As to quaternary structure, composed of six subunits; NqrA, NqrB, NqrC, NqrD, NqrE and NqrF.

The protein resides in the cell inner membrane. It catalyses the reaction a ubiquinone + n Na(+)(in) + NADH + H(+) = a ubiquinol + n Na(+)(out) + NAD(+). Its function is as follows. NQR complex catalyzes the reduction of ubiquinone-1 to ubiquinol by two successive reactions, coupled with the transport of Na(+) ions from the cytoplasm to the periplasm. NqrA to NqrE are probably involved in the second step, the conversion of ubisemiquinone to ubiquinol. The chain is Na(+)-translocating NADH-quinone reductase subunit E from Chlamydia caviae (strain ATCC VR-813 / DSM 19441 / 03DC25 / GPIC) (Chlamydophila caviae).